A 161-amino-acid polypeptide reads, in one-letter code: Ribosome maturation factor RimP (161 aa).

Belongs to the RimP family.

The protein localises to the cytoplasm. Its function is as follows. Required for maturation of 30S ribosomal subunits. This chain is Ribosome maturation factor RimP, found in Herminiimonas arsenicoxydans.